A 459-amino-acid polypeptide reads, in one-letter code: MDQSNRYARLDLQEADLIAGGRHVLCAYVMKPKAGYGYLETAAHFAAESSTGTNVEVSTTDDFTRGVDALVYEIDPEKEIMKIAYPVELFDRNIIDGRAMLCSFLTLTIGNNQGMGDVEYAKMHDFYVPPCYLRLFDGPSMNIADMWRVLGRDVRNGGMVVGTIIKPKLGLRPKPFADACHEFWLGADFIKNDEPQGNQTFAPLKETIRLVADAMKRAQDETGEAKLFSANITADDHYEMVARGEYILETFGENADHVAFLVDGYVTGPAAITTARRQFPRQFLHYHRAGHGAVTSPQSMRGYTAFVLSKMARLQGASGIHTGTMGYGKMEGEAADKIMAYMLTDEAAEGPFYRQTGWGSKATTPIISGGMNALRLPGFFDNLGHSNVIQTSGGGAFGHLDGGTAGAKSLRQSHEAWMAGVDLVTYAREHRELARAFESFPADADKFYPGWRDRLHRAA.

Asn-111 is a substrate binding site. The active-site Proton acceptor is the Lys-166. Lys-168 lines the substrate pocket. Mg(2+) contacts are provided by Lys-191, Asp-193, and Glu-194. Lys-191 is modified (N6-carboxylysine). His-287 acts as the Proton acceptor in catalysis. Arg-288, His-321, and Ser-368 together coordinate substrate.

Belongs to the RuBisCO large chain family. Type II subfamily. In terms of assembly, homodimer. Mg(2+) serves as cofactor.

The catalysed reaction is 2 (2R)-3-phosphoglycerate + 2 H(+) = D-ribulose 1,5-bisphosphate + CO2 + H2O. It catalyses the reaction D-ribulose 1,5-bisphosphate + O2 = 2-phosphoglycolate + (2R)-3-phosphoglycerate + 2 H(+). Functionally, ruBisCO catalyzes two reactions: the carboxylation of D-ribulose 1,5-bisphosphate, the primary event in carbon dioxide fixation, as well as the oxidative fragmentation of the pentose substrate. Both reactions occur simultaneously and in competition at the same active site. This Cereibacter sphaeroides (Rhodobacter sphaeroides) protein is Ribulose bisphosphate carboxylase.